Here is a 177-residue protein sequence, read N- to C-terminus: Large ribosomal subunit protein bL9 (177 aa).

It belongs to the bacterial ribosomal protein bL9 family.

Functionally, binds to the 23S rRNA. This is Large ribosomal subunit protein bL9 from Rhodopirellula baltica (strain DSM 10527 / NCIMB 13988 / SH1).